The chain runs to 250 residues: MSDLTSTILFEHPLNEKMRTWLRMEFLLQQLESHRSLDNIANALTFFRSASDLIDVLERGEVRTDLLKELERQQQKLQQWADIPGVDVSLVDSLRNQLKSRAAVLMSAPRIGQSLKEDRLISVVRQRLSIPGGCCSFDLPTLHVWLHQPSEQRDQHINKLLASLAPLHQSLTIILDLIRQSCPLRSQISLNGFFQDNAGGADLLRLRLPLDPQLYPQISGHKTRYAIRFLALDSENGTVPARLSFELACC.

This sequence belongs to the ZapD family. In terms of assembly, interacts with FtsZ.

The protein localises to the cytoplasm. Its function is as follows. Cell division factor that enhances FtsZ-ring assembly. Directly interacts with FtsZ and promotes bundling of FtsZ protofilaments, with a reduction in FtsZ GTPase activity. The chain is Cell division protein ZapD from Yersinia pseudotuberculosis serotype O:1b (strain IP 31758).